A 1031-amino-acid chain; its full sequence is Probable ATP-dependent RNA helicase DDX46 (1031 aa).

Basic residues predominate over residues 1–24 (MGRESRHYRKRSASRGRSGSRSRS). The segment at 1–228 (MGRESRHYRK…EMEGEELDPL (228 aa)) is disordered. G2 is lipidated: N-myristoyl glycine. The segment covering 26-49 (SPSDKRSKRGDDRRSRSRDRDRRR) has biased composition (basic and acidic residues). 2 stretches are compositionally biased toward basic residues: residues 50-73 (ERSR…RSRS) and 81-103 (ERRR…RRSR). Positions 112–200 (KKTENRSRSK…EMKQGKKWSL (89 aa)) are enriched in basic and acidic residues. The stretch at 152–197 (DQNKLEEEMRKRKERVEKWREEQRKKAMENIGELKKEIEEMKQGKK) forms a coiled coil. K186 participates in a covalent cross-link: Glycyl lysine isopeptide (Lys-Gly) (interchain with G-Cter in SUMO2). A Phosphoserine modification is found at S199. 2 stretches are compositionally biased toward acidic residues: residues 201 to 211 (EDDDDDEDDPA) and 219 to 228 (EMEGEELDPL). At K263 the chain carries N6-acetyllysine. Y294 is modified (phosphotyrosine). S295 and S296 each carry phosphoserine. A Glycyl lysine isopeptide (Lys-Gly) (interchain with G-Cter in SUMO2) cross-link involves residue K325. Residue S346 is modified to Phosphoserine. The short motif at 372 to 400 (KSWVQCGISMKILNSLKKHGYEKPTPIQT) is the Q motif element. The Helicase ATP-binding domain occupies 403-581 (IPAIMSGRDL…RRILSKPIEV (179 aa)). 416–423 (AKTGSGKT) provides a ligand contact to ATP. The DEAD box motif lies at 529-532 (DEAD). Residues 592 to 753 (DVEQQVIVIE…AVPPDLEKLW (162 aa)) form the Helicase C-terminal domain. Residue K776 is modified to N6-acetyllysine. Residue K779 forms a Glycyl lysine isopeptide (Lys-Gly) (interchain with G-Cter in SUMO2) linkage. S804 is modified (phosphoserine). K903 is subject to N6-acetyllysine. Glycyl lysine isopeptide (Lys-Gly) (interchain with G-Cter in SUMO2) cross-links involve residues K907 and K915. The residue at position 928 (S928) is a Phosphoserine.

The protein belongs to the DEAD box helicase family. DDX46/PRP5 subfamily. Component of the 17S U2 SnRNP complex, a ribonucleoprotein complex that contains small nuclear RNA (snRNA) U2 and a number of specific proteins. Within the 17S U2 SnRNP complex, DDX46 is part of the SF3B subcomplex, which is required for 'A' complex assembly formed by the stable binding of U2 snRNP to the branchpoint sequence in pre-mRNA. Recruited to the 17S U2 SnRNP complex following release of DDX42; DDX42 and DDX46 bind the SF3B subcomplex in a competitive manner.

The protein localises to the nucleus speckle. It is found in the nucleus. Its subcellular location is the cajal body. The catalysed reaction is ATP + H2O = ADP + phosphate + H(+). Its function is as follows. Component of the 17S U2 SnRNP complex of the spliceosome, a large ribonucleoprotein complex that removes introns from transcribed pre-mRNAs. The 17S U2 SnRNP complex (1) directly participates in early spliceosome assembly and (2) mediates recognition of the intron branch site during pre-mRNA splicing by promoting the selection of the pre-mRNA branch-site adenosine, the nucleophile for the first step of splicing. Within the 17S U2 SnRNP complex, DDX46 plays essential roles during assembly of pre-spliceosome and proofreading of the branch site. This Homo sapiens (Human) protein is Probable ATP-dependent RNA helicase DDX46.